The chain runs to 290 residues: ATP synthase gamma chain (290 aa).

Belongs to the ATPase gamma chain family. F-type ATPases have 2 components, CF(1) - the catalytic core - and CF(0) - the membrane proton channel. CF(1) has five subunits: alpha(3), beta(3), gamma(1), delta(1), epsilon(1). CF(0) has three main subunits: a, b and c.

Its subcellular location is the cell inner membrane. Functionally, produces ATP from ADP in the presence of a proton gradient across the membrane. The gamma chain is believed to be important in regulating ATPase activity and the flow of protons through the CF(0) complex. In Gemmatimonas aurantiaca (strain DSM 14586 / JCM 11422 / NBRC 100505 / T-27), this protein is ATP synthase gamma chain.